The sequence spans 395 residues: MHVRAPWSLPEPTLAYFPNARFVPSDRDLGAGALRLVGEDCPAPTRGGVAVADGPTEPGFNDFHHVPVLAQRCVELLRPALTRHHADGSEAVLVDATIGAGGHAERFLTELPGLRLIGLDRDPSALEIVRTRLARFTDRVTLVHTRYDGLASALTELGYGAAQSIDGALFDLGVSSMQLDQAERGFAYSKDAPLDMRMNPQSALSGADIINTYDEAALADILHRYGEERFARRIAARIIRRRADRPFTTTAELVALLYEAIPAAARRTGGHPAKRTFQALRIAVNDELGSLRSAVPAAMDALAVGGRIVVMAYQSLEDRIVKRVFADAVASRTPVDLPVELPGHGPRFRSLTHGAERADAAEVEHNPRSAPVRLRALQRLELEALPRQGTGKGES.

S-adenosyl-L-methionine contacts are provided by residues Gly-101–His-103, Asp-120, Tyr-147, Asp-171, and Gln-178.

This sequence belongs to the methyltransferase superfamily. RsmH family.

It is found in the cytoplasm. It carries out the reaction cytidine(1402) in 16S rRNA + S-adenosyl-L-methionine = N(4)-methylcytidine(1402) in 16S rRNA + S-adenosyl-L-homocysteine + H(+). In terms of biological role, specifically methylates the N4 position of cytidine in position 1402 (C1402) of 16S rRNA. In Mycobacterium ulcerans (strain Agy99), this protein is Ribosomal RNA small subunit methyltransferase H.